The following is a 380-amino-acid chain: UDP-N-acetylglucosamine--N-acetylmuramyl-(pentapeptide) pyrophosphoryl-undecaprenol N-acetylglucosamine transferase (380 aa).

Residues 23 to 25, N137, R178, S210, I266, and Q311 contribute to the UDP-N-acetyl-alpha-D-glucosamine site; that span reads TGG.

Belongs to the glycosyltransferase 28 family. MurG subfamily.

It localises to the cell inner membrane. The catalysed reaction is di-trans,octa-cis-undecaprenyl diphospho-N-acetyl-alpha-D-muramoyl-L-alanyl-D-glutamyl-meso-2,6-diaminopimeloyl-D-alanyl-D-alanine + UDP-N-acetyl-alpha-D-glucosamine = di-trans,octa-cis-undecaprenyl diphospho-[N-acetyl-alpha-D-glucosaminyl-(1-&gt;4)]-N-acetyl-alpha-D-muramoyl-L-alanyl-D-glutamyl-meso-2,6-diaminopimeloyl-D-alanyl-D-alanine + UDP + H(+). Its pathway is cell wall biogenesis; peptidoglycan biosynthesis. Cell wall formation. Catalyzes the transfer of a GlcNAc subunit on undecaprenyl-pyrophosphoryl-MurNAc-pentapeptide (lipid intermediate I) to form undecaprenyl-pyrophosphoryl-MurNAc-(pentapeptide)GlcNAc (lipid intermediate II). This is UDP-N-acetylglucosamine--N-acetylmuramyl-(pentapeptide) pyrophosphoryl-undecaprenol N-acetylglucosamine transferase from Bacteroides fragilis (strain ATCC 25285 / DSM 2151 / CCUG 4856 / JCM 11019 / LMG 10263 / NCTC 9343 / Onslow / VPI 2553 / EN-2).